We begin with the raw amino-acid sequence, 211 residues long: MKARKYNKEGVFVSEVELPAELFATGISLGAIYDAVKAENANNRQGTHSTKDRSEVRGGGIKPWAQKGTGRARQGSIRAPHFVGGGIIHGPKPRDYSSNLSRSVKKKAVLSILNKKAEENRIAIIEDVEPSSYSTKSIYNILKNMDIAEKGNVGFVVAGENQFLKKSTRNIENLKYVNSKRVVCRDILYNNNLVISESALKELQAQYSKKG.

The segment at 42–73 is disordered; the sequence is NNRQGTHSTKDRSEVRGGGIKPWAQKGTGRAR.

The protein belongs to the universal ribosomal protein uL4 family. In terms of assembly, part of the 50S ribosomal subunit.

Functionally, one of the primary rRNA binding proteins, this protein initially binds near the 5'-end of the 23S rRNA. It is important during the early stages of 50S assembly. It makes multiple contacts with different domains of the 23S rRNA in the assembled 50S subunit and ribosome. Its function is as follows. Forms part of the polypeptide exit tunnel. This chain is Large ribosomal subunit protein uL4, found in Leptospira biflexa serovar Patoc (strain Patoc 1 / Ames).